The primary structure comprises 65 residues: Large ribosomal subunit protein uL29 (65 aa).

The protein belongs to the universal ribosomal protein uL29 family.

The polypeptide is Large ribosomal subunit protein uL29 (Bacteroides thetaiotaomicron (strain ATCC 29148 / DSM 2079 / JCM 5827 / CCUG 10774 / NCTC 10582 / VPI-5482 / E50)).